A 188-amino-acid polypeptide reads, in one-letter code: Probable chorismate pyruvate-lyase (188 aa).

Substrate-binding residues include arginine 77, leucine 115, and glutamate 174.

Belongs to the UbiC family.

It localises to the cytoplasm. The enzyme catalyses chorismate = 4-hydroxybenzoate + pyruvate. Its pathway is cofactor biosynthesis; ubiquinone biosynthesis. Its function is as follows. Removes the pyruvyl group from chorismate, with concomitant aromatization of the ring, to provide 4-hydroxybenzoate (4HB) for the ubiquinone pathway. This Shewanella loihica (strain ATCC BAA-1088 / PV-4) protein is Probable chorismate pyruvate-lyase.